We begin with the raw amino-acid sequence, 353 residues long: C-X-C chemokine receptor type 4 (353 aa).

Residues 1–22 (MEGIRIFTSDNYTEDDLGSGDY) form an important for chemokine binding and signaling region. Topologically, residues 1–39 (MEGIRIFTSDNYTEDDLGSGDYDSMKEPCFREENAHFNR) are extracellular. N-linked (GlcNAc...) asparagine glycosylation occurs at Asn11. Residue Tyr12 is modified to Sulfotyrosine. Ser19 carries O-linked (Xyl...) (chondroitin sulfate) serine glycosylation. Sulfotyrosine is present on Tyr22. Cystine bridges form between Cys29–Cys275 and Cys110–Cys187. Residues 40–64 (IFLPTVYSIIFLTGIVGNGLVILVM) form a helical membrane-spanning segment. Residues 65 to 78 (GYQKKLRSMTDKYR) are Cytoplasmic-facing. A helical transmembrane segment spans residues 79-100 (LHLSVADLLFVLTLPFWAVDAV). The chemokine binding stretch occupies residues 95–98 (WAVD). The Extracellular segment spans residues 101–111 (ANWYFGKFLCK). Residues 112 to 131 (AVHVIYTVNLYSSVLILAFI) form a helical membrane-spanning segment. Residues 114-118 (HVIYT) form a chemokine binding region. The Cytoplasmic portion of the chain corresponds to 132–155 (SLDRYLAIVHATNSQKPRKLLAEK). The Important for signaling motif lies at 134 to 136 (DRY). Residues 136-148 (YLAIVHATNSQKP) form an involved in dimerization; when bound to chemokine region. A helical membrane pass occupies residues 156–175 (VVYVGVWLPAVLLTIPDLIF). At 176–196 (ADIKEVDERYICDRFYPSDLW) the chain is on the extracellular side. A chemokine binding, important for signaling region spans residues 187-191 (CDRFY). Residues 192 to 211 (PSDLWLVVFQFQHIVVGLLL) form an involved in dimerization region. A helical transmembrane segment spans residues 197-217 (LVVFQFQHIVVGLLLPGIVIL). At 218-242 (SCYCIIISKLSHSKGYQKRKALKTT) the chain is on the cytoplasmic side. Residues 243–262 (VILILTFFACWLPYYIGISI) traverse the membrane as a helical segment. The Extracellular portion of the chain corresponds to 263-283 (DSFILLEIIQQGCEFESTVHK). The segment at 267 to 269 (LLE) is involved in dimerization. A helical transmembrane segment spans residues 284 to 303 (WISITEALAFFHCCLNPILY). Topologically, residues 304 to 353 (AFLGAKFKTSAQHALTSVSRGSSLKILSKGKRGGHSSVSTESESSSFHSS) are cytoplasmic. A phosphoserine mark is found at Ser320 and Ser322. Phosphoserine; by PKC and GRK6 is present on residues Ser325 and Ser326. Residues 330–353 (LSKGKRGGHSSVSTESESSSFHSS) are disordered. At Ser331 the chain carries Phosphoserine; by GRK6. Lys332 is covalently cross-linked (Glycyl lysine isopeptide (Lys-Gly) (interchain with G-Cter in ubiquitin)). A compositionally biased stretch (low complexity) spans 338 to 353 (HSSVSTESESSSFHSS). Residue Ser340 is modified to Phosphoserine; by GRK6. Ser349 and Ser352 each carry phosphoserine.

It belongs to the G-protein coupled receptor 1 family. Monomer. Can form homodimers. Interacts with CD164. Interacts with ARRB2; the interaction is dependent on the C-terminal phosphorylation of CXCR4 and allows activation of MAPK1 and MAPK3. Interacts with ARR3; the interaction is dependent on the C-terminal phosphorylation of CXCR4 and modulates calcium mobilization. Interacts with RNF113A; the interaction, enhanced by CXCL12, promotes CXCR4 ubiquitination and subsequent degradation. Interacts (via the cytoplasmic C-terminal) with ITCH (via the WW domains I and II); the interaction, enhanced by CXCL12, promotes CXCR4 ubiquitination and leads to its degradation. Interacts with extracellular ubiquitin. Interacts with DBN1; this interaction is enhanced by antigenic stimulation. Following LPS binding, may form a complex with GDF5, HSP90AA1 and HSPA8. Phosphorylated on agonist stimulation. Rapidly phosphorylated on serine and threonine residues in the C-terminal. Phosphorylation at Ser-325 and Ser-326 leads to recruitment of ITCH, ubiquitination and protein degradation. Post-translationally, ubiquitinated after ligand binding, leading to its degradation. Ubiquitinated by ITCH at the cell membrane on agonist stimulation. The ubiquitin-dependent mechanism, endosomal sorting complex required for transport (ESCRT), then targets CXCR4 for lysosomal degradation. This process is dependent also on prior Ser-/Thr-phosphorylation in the C-terminal of CXCR4. Also binding of ARRB1 to STAM negatively regulates CXCR4 sorting to lysosomes though modulating ubiquitination of SFR5S. In terms of processing, sulfation is required for efficient binding of CXCL12/SDF-1alpha and promotes its dimerization. O- and N-glycosylated. N-glycosylation can mask coreceptor function. The O-glycosylation chondroitin sulfate attachment does not affect interaction with CXCL12/SDF-1alpha nor its coreceptor activity. In terms of tissue distribution, brain, heart, kidney, lung and liver.

It localises to the cell membrane. Its subcellular location is the cell junction. It is found in the early endosome. The protein localises to the late endosome. The protein resides in the lysosome. In terms of biological role, receptor for the C-X-C chemokine CXCL12/SDF-1 that transduces a signal by increasing intracellular calcium ion levels and enhancing MAPK1/MAPK3 activation. Involved in the AKT signaling cascade. Plays a role in regulation of cell migration, e.g. during wound healing. Acts as a receptor for extracellular ubiquitin; leading to enhanced intracellular calcium ions and reduced cellular cAMP levels. Binds bacterial lipopolysaccharide (LPS) et mediates LPS-induced inflammatory response, including TNF secretion by monocytes. Involved in hematopoiesis and in cardiac ventricular septum formation. Also plays an essential role in vascularization of the gastrointestinal tract, probably by regulating vascular branching and/or remodeling processes in endothelial cells. Involved in cerebellar development. In the CNS, could mediate hippocampal-neuron survival. The protein is C-X-C chemokine receptor type 4 (CXCR4) of Bos taurus (Bovine).